The sequence spans 276 residues: RRP15-like protein (276 aa).

Disordered regions lie at residues 1-132 (MALL…QLRV) and 201-276 (KRAK…DGEE). 2 stretches are compositionally biased toward basic and acidic residues: residues 75-95 (FQKDAANKKPGFDFEIEKADV) and 226-245 (KGSSGKKKSEWSVLREDFMT). Acidic residues predominate over residues 254-276 (EEDDDEEGHNDEADDSDYDDGEE). The residue at position 269 (Ser269) is a Phosphoserine. At Tyr271 the chain carries Phosphotyrosine.

This sequence belongs to the RRP15 family.

The polypeptide is RRP15-like protein (Drosophila melanogaster (Fruit fly)).